The primary structure comprises 393 residues: MTMLATKKDPMIVSMGPQHPSMHGVLRLIVTSDGENVIDCEPILGYLHRGMEKIAENRTIIQYLPYVTRWDYLATMFTEAITVNAPEKLANIQIPKRASYIRIIMLELSRIASHLLWLGPFMADVGAQTPFFYIFREREMIYDLFEAATGMRMMHNYFRIGGVAVDFPYGWVDKCLDFCDYFLPKVDEYEQLITNNPIFLKRVEGVGFIGREEAINWGLSGPMLRASGVRWDLRKVDHYECYDELDWQIQWQKEGDSLARYLVRIGEMRESVRIIQQALKVIPGGPYENLEARRLNQQKDSEWNDFDYQFISKKSSPTFKLPKQEHYVRIEAPKGELGIFLIGDDNVSPWRWKIRPPGFINLQILPQLVKGMKLADIMTILGSIDIIMGEVDR.

Belongs to the complex I 49 kDa subunit family. In terms of assembly, NDH is composed of at least 16 different subunits, 5 of which are encoded in the nucleus.

Its subcellular location is the plastid. The protein localises to the chloroplast thylakoid membrane. The enzyme catalyses a plastoquinone + NADH + (n+1) H(+)(in) = a plastoquinol + NAD(+) + n H(+)(out). The catalysed reaction is a plastoquinone + NADPH + (n+1) H(+)(in) = a plastoquinol + NADP(+) + n H(+)(out). Functionally, NDH shuttles electrons from NAD(P)H:plastoquinone, via FMN and iron-sulfur (Fe-S) centers, to quinones in the photosynthetic chain and possibly in a chloroplast respiratory chain. The immediate electron acceptor for the enzyme in this species is believed to be plastoquinone. Couples the redox reaction to proton translocation, and thus conserves the redox energy in a proton gradient. The chain is NAD(P)H-quinone oxidoreductase subunit H, chloroplastic from Angiopteris evecta (Mule's foot fern).